The following is a 175-amino-acid chain: Probable DNA-directed RNA polymerase subunit delta (175 aa).

The 68-residue stretch at 14–81 (MALVEIAHEI…SDQTWGLRSW (68 aa)) folds into the HTH HARE-type domain. A disordered region spans residues 110–175 (LDLDEFEEVD…YDDEEEDRKD (66 aa)).

The protein belongs to the RpoE family. As to quaternary structure, RNAP is composed of a core of 2 alpha, a beta and a beta' subunits. The core is associated with a delta subunit and one of several sigma factors.

Participates in both the initiation and recycling phases of transcription. In the presence of the delta subunit, RNAP displays an increased specificity of transcription, a decreased affinity for nucleic acids, and an increased efficiency of RNA synthesis because of enhanced recycling. The chain is Probable DNA-directed RNA polymerase subunit delta from Bacillus velezensis (strain DSM 23117 / BGSC 10A6 / LMG 26770 / FZB42) (Bacillus amyloliquefaciens subsp. plantarum).